Consider the following 703-residue polypeptide: Polyribonucleotide nucleotidyltransferase (703 aa).

The Mg(2+) site is built by Asp-484 and Asp-490. The 60-residue stretch at 551–610 (PQMIRMQIDPDKIREVIGPGGKTIHKIVDETGCKIDIEDDGSLFIMATDEEAAKKARFFV) folds into the KH domain. One can recognise an S1 motif domain in the interval 620 to 694 (GKTYMGTVKR…RQGRVNLSRK (75 aa)).

It belongs to the polyribonucleotide nucleotidyltransferase family. It depends on Mg(2+) as a cofactor.

Its subcellular location is the cytoplasm. The enzyme catalyses RNA(n+1) + phosphate = RNA(n) + a ribonucleoside 5'-diphosphate. Functionally, involved in mRNA degradation. Catalyzes the phosphorolysis of single-stranded polyribonucleotides processively in the 3'- to 5'-direction. The chain is Polyribonucleotide nucleotidyltransferase from Syntrophomonas wolfei subsp. wolfei (strain DSM 2245B / Goettingen).